The primary structure comprises 487 residues: 1-hydroxycarotenoid 3,4-desaturase (487 aa).

FAD-binding positions include Gly12, Glu31, Lys39, Ser55–Leu56, Val247, Asn275, Leu431, Gly461, and Gly468–Ile469.

The protein belongs to the carotenoid/retinoid oxidoreductase family. In terms of assembly, monomer.

It catalyses the reaction rhodopin + A = (3E)-3,4-didehydrorhodopin + AH2. The enzyme catalyses 1'-hydroxy-gamma-carotene + A = 1'-hydroxytorulene + AH2. The catalysed reaction is 1-hydroxy-all-trans-1,2-dihydro-neurosporene + A = demethylspheroidene + AH2. It carries out the reaction 1,1'-dihydroxy-1,1',2,2'-tetrahydroneurosporene + A = 1'-hydroxy-demethylspheroidene + AH2. It catalyses the reaction 1,1'-dihydroxy-1,1',2,2'-tetrahydrolycopene + A = 1,1'-dihydroxy-3,4-didehydro-1,2-dihydrolycopene + AH2. It functions in the pathway carotenoid biosynthesis. In terms of biological role, catalyzes the introduction of a C-3,4 double bond into 1'-hydroxy-gamma-carotene and rhodopin (1-hydroxylycopene) to yield 1'-hydroxytorulene and (3E)-3,4-didehydrorhodopin, respectively. Can also use 1-hydroxy-all-trans-1,2-dihydro-neurosporene, 1,1'-dihydroxy-1,1',2,2'-tetrahydroneurosporene and 1,1'-dihydroxy-1,1',2,2'-tetrahydrolycopene. Probably involved in the synthesis of myxol, a gamma-carotene derivative. May use FAD as a proton acceptor. This Nonlabens dokdonensis (strain DSM 17205 / KCTC 12402 / DSW-6) (Donghaeana dokdonensis) protein is 1-hydroxycarotenoid 3,4-desaturase.